The following is a 493-amino-acid chain: Beta-amyrin 11-oxidase (493 aa).

The helical transmembrane segment at 7 to 23 (CMSAATLLVCYIFGSKF) threads the bilayer. Cysteine 439 is a binding site for heme.

This sequence belongs to the cytochrome P450 family. Requires heme as cofactor. As to expression, expressed in roots and stolons. Not detected in leaves and stems.

Its subcellular location is the membrane. The catalysed reaction is beta-amyrin + 2 reduced [NADPH--hemoprotein reductase] + 2 O2 = 11-oxo-beta-amyrin + 2 oxidized [NADPH--hemoprotein reductase] + 3 H2O + 2 H(+). It catalyses the reaction beta-amyrin + reduced [NADPH--hemoprotein reductase] + O2 = 11alpha-hydroxy-beta-amyrin + oxidized [NADPH--hemoprotein reductase] + H2O + H(+). It carries out the reaction 11alpha-hydroxy-beta-amyrin + reduced [NADPH--hemoprotein reductase] + O2 = 11-oxo-beta-amyrin + oxidized [NADPH--hemoprotein reductase] + 2 H2O + H(+). Involved in the biosynthesis of Glycyrrhetinic acid (GA), a natural product which exhibits anti-inflammatory activity. Catalyzes 2 successive oxidations of beta-amyrin, producing a precursor of the triterpene sweetener glycyrrhizin. Unable to use 11-deoxoglycyrrhetinic acid or ent-kaurenoic acid as substrates. This is Beta-amyrin 11-oxidase from Glycyrrhiza uralensis (Chinese licorice).